Consider the following 138-residue polypeptide: ATP synthase epsilon chain (138 aa).

It belongs to the ATPase epsilon chain family. In terms of assembly, F-type ATPases have 2 components, CF(1) - the catalytic core - and CF(0) - the membrane proton channel. CF(1) has five subunits: alpha(3), beta(3), gamma(1), delta(1), epsilon(1). CF(0) has three main subunits: a, b and c.

It localises to the cell inner membrane. Produces ATP from ADP in the presence of a proton gradient across the membrane. The chain is ATP synthase epsilon chain from Geobacter sp. (strain M21).